Reading from the N-terminus, the 196-residue chain is Ribosome maturation factor RimP (196 aa).

The tract at residues 164–196 (LAPQKPNKPGPKKPGHDKKKPSNEPAAGKPRAE) is disordered. A compositionally biased stretch (basic residues) spans 173–182 (GPKKPGHDKK).

It belongs to the RimP family.

The protein resides in the cytoplasm. In terms of biological role, required for maturation of 30S ribosomal subunits. The protein is Ribosome maturation factor RimP of Xanthomonas campestris pv. campestris (strain B100).